Here is a 227-residue protein sequence, read N- to C-terminus: PKHD-type hydroxylase Dtpsy_0528 (227 aa).

The Fe2OG dioxygenase domain occupies 78-178; it reads TIYPPKFNRY…RVASFFWIES (101 aa). 3 residues coordinate Fe cation: His-96, Asp-98, and His-159. Arg-169 contributes to the 2-oxoglutarate binding site.

Requires Fe(2+) as cofactor. It depends on L-ascorbate as a cofactor.

The sequence is that of PKHD-type hydroxylase Dtpsy_0528 from Acidovorax ebreus (strain TPSY) (Diaphorobacter sp. (strain TPSY)).